The sequence spans 75 residues: Protein RALF-like 9 (75 aa).

An N-terminal signal peptide occupies residues 1–28 (MGMSKSIKVILSLALVVFLALAATKVEA). 2 disulfides stabilise this stretch: cysteine 46–cysteine 54 and cysteine 66–cysteine 72.

It belongs to the plant rapid alkalinization factor (RALF) family.

The protein resides in the secreted. In terms of biological role, cell signaling peptide that may regulate plant stress, growth, and development. Mediates a rapid alkalinization of extracellular space by mediating a transient increase in the cytoplasmic Ca(2+) concentration leading to a calcium-dependent signaling events through a cell surface receptor and a concomitant activation of some intracellular mitogen-activated protein kinases. This Arabidopsis thaliana (Mouse-ear cress) protein is Protein RALF-like 9 (RALFL9).